The sequence spans 273 residues: Putative pyruvate, phosphate dikinase regulatory protein (273 aa).

151–158 (GVSRTSKT) serves as a coordination point for ADP.

Belongs to the pyruvate, phosphate/water dikinase regulatory protein family. PDRP subfamily.

The catalysed reaction is N(tele)-phospho-L-histidyl/L-threonyl-[pyruvate, phosphate dikinase] + ADP = N(tele)-phospho-L-histidyl/O-phospho-L-threonyl-[pyruvate, phosphate dikinase] + AMP + H(+). It carries out the reaction N(tele)-phospho-L-histidyl/O-phospho-L-threonyl-[pyruvate, phosphate dikinase] + phosphate + H(+) = N(tele)-phospho-L-histidyl/L-threonyl-[pyruvate, phosphate dikinase] + diphosphate. Bifunctional serine/threonine kinase and phosphorylase involved in the regulation of the pyruvate, phosphate dikinase (PPDK) by catalyzing its phosphorylation/dephosphorylation. This chain is Putative pyruvate, phosphate dikinase regulatory protein, found in Desulfitobacterium hafniense (strain Y51).